Reading from the N-terminus, the 436-residue chain is Xylose isomerase (436 aa).

Catalysis depends on residues His100 and Asp103. Mg(2+) contacts are provided by Glu231, Glu267, His270, Asp295, Asp306, Asp308, and Asp338.

It belongs to the xylose isomerase family. As to quaternary structure, homotetramer. It depends on Mg(2+) as a cofactor.

It localises to the cytoplasm. The enzyme catalyses alpha-D-xylose = alpha-D-xylulofuranose. The polypeptide is Xylose isomerase (Rhizobium johnstonii (strain DSM 114642 / LMG 32736 / 3841) (Rhizobium leguminosarum bv. viciae)).